A 100-amino-acid chain; its full sequence is Carboxysome shell vertex protein CcmL (100 aa).

The region spanning 1-83 is the BMV domain; that stretch reads MQIGRVRGTV…VDAVVIGIID (83 aa).

The protein belongs to the CcmL/EutN family. CcmL subfamily. Homopentamer. Interacts with full-length CcmM.

It is found in the carboxysome. Functionally, probably forms vertices in the carboxysome, a polyhedral inclusion where RuBisCO (ribulose bisphosphate carboxylase, rbcL-rbcS) is sequestered. Has been modeled to induce curvature upon insertion into an otherwise flat hexagonal molecular layer of CcmK subunits. The polypeptide is Carboxysome shell vertex protein CcmL (Gloeobacter violaceus (strain ATCC 29082 / PCC 7421)).